The primary structure comprises 62 residues: U10-hottentoxin-Hj2a (62 aa).

A signal peptide spans 1–22 (MQKLLIILILFCILKFNVDVEG). 3 disulfides stabilise this stretch: C28–C46, C33–C59, and C37–C61.

Belongs to the short scorpion toxin superfamily. Potassium channel inhibitor family. Alpha-KTx 23 subfamily. In terms of tissue distribution, expressed by the venom gland.

The protein resides in the secreted. May block potassium channels. The chain is U10-hottentoxin-Hj2a from Hottentotta judaicus (Black scorpion).